Here is an 82-residue protein sequence, read N- to C-terminus: uncharacterized protein (82 aa).

The disordered stretch occupies residues 1 to 20 (MMNLSPPFKSPSGSSRAGRR).

This is an uncharacterized protein from Archaeoglobus fulgidus (strain ATCC 49558 / DSM 4304 / JCM 9628 / NBRC 100126 / VC-16).